The chain runs to 251 residues: tRNA (guanine-N(1)-)-methyltransferase (251 aa).

S-adenosyl-L-methionine-binding positions include Gly111 and 131 to 136 (LGDFVL).

The protein belongs to the RNA methyltransferase TrmD family. Homodimer.

The protein resides in the cytoplasm. The enzyme catalyses guanosine(37) in tRNA + S-adenosyl-L-methionine = N(1)-methylguanosine(37) in tRNA + S-adenosyl-L-homocysteine + H(+). In terms of biological role, specifically methylates guanosine-37 in various tRNAs. The sequence is that of tRNA (guanine-N(1)-)-methyltransferase from Synechococcus sp. (strain JA-2-3B'a(2-13)) (Cyanobacteria bacterium Yellowstone B-Prime).